A 352-amino-acid polypeptide reads, in one-letter code: tRNA-specific 2-thiouridylase MnmA (352 aa).

Position 6-13 (6-13) interacts with ATP; the sequence is AVSGGTDS. The active-site Nucleophile is the Cys-92. Cys-92 and Cys-189 are oxidised to a cystine. Gly-116 contributes to the ATP binding site. Positions 139–141 are interaction with tRNA; it reads KDQ. Cys-189 acts as the Cysteine persulfide intermediate in catalysis. The segment at 294-295 is interaction with tRNA; the sequence is RY.

The protein belongs to the MnmA/TRMU family.

The protein resides in the cytoplasm. The enzyme catalyses S-sulfanyl-L-cysteinyl-[protein] + uridine(34) in tRNA + AH2 + ATP = 2-thiouridine(34) in tRNA + L-cysteinyl-[protein] + A + AMP + diphosphate + H(+). Functionally, catalyzes the 2-thiolation of uridine at the wobble position (U34) of tRNA, leading to the formation of s(2)U34. The sequence is that of tRNA-specific 2-thiouridylase MnmA from Lawsonia intracellularis (strain PHE/MN1-00).